A 146-amino-acid polypeptide reads, in one-letter code: Mitochondrial import receptor subunit TOM20 homolog B (146 aa).

Topologically, residues 1–5 (MMGGS) are mitochondrial intermembrane. The helical transmembrane segment at 6–25 (SSRIAAGLGAALFVGYCIYF) threads the bilayer. Over 26–146 (DRKRRSDPNY…AQSISDDDIE (121 aa)) the chain is Cytoplasmic. The segment covering 37 to 47 (NKLRERRKKQK) has biased composition (basic residues). The disordered stretch occupies residues 37–56 (NKLRERRKKQKAAQEKAGLS). At Ser141 the chain carries Phosphoserine.

The protein belongs to the Tom20 family. Forms part of the preprotein translocase complex of the outer mitochondrial membrane (TOM complex). Interacts with tom22.

It localises to the mitochondrion outer membrane. In terms of biological role, central component of the receptor complex responsible for the recognition and translocation of cytosolically synthesized mitochondrial preproteins. Together with tom22 functions as the transit peptide receptor at the surface of the mitochondrion outer membrane and facilitates the movement of preproteins into the tom40 translocation pore. The sequence is that of Mitochondrial import receptor subunit TOM20 homolog B (tomm20b) from Danio rerio (Zebrafish).